The sequence spans 141 residues: Lutropin subunit beta (141 aa).

The first 18 residues, 1 to 18 (MGTLQGLLLWLLLGTGGA), serve as a signal peptide directing secretion. 6 disulfide bridges follow: C29–C77, C43–C92, C46–C130, C54–C108, C58–C110, and C113–C120. An N-linked (GlcNAc...) asparagine glycan is attached at N33.

It belongs to the glycoprotein hormones subunit beta family. Heterodimer of a common alpha chain and a unique beta chain which confers biological specificity to thyrotropin, lutropin, follitropin and gonadotropin.

The protein localises to the secreted. In terms of biological role, promotes spermatogenesis and ovulation by stimulating the testes and ovaries to synthesize steroids. This is Lutropin subunit beta (LHB) from Oryctolagus cuniculus (Rabbit).